The following is a 393-amino-acid chain: NADH-quinone oxidoreductase subunit D 2 (393 aa).

It belongs to the complex I 49 kDa subunit family. In terms of assembly, NDH-1 is composed of 14 different subunits. Subunits NuoB, C, D, E, F, and G constitute the peripheral sector of the complex.

It is found in the cell inner membrane. It carries out the reaction a quinone + NADH + 5 H(+)(in) = a quinol + NAD(+) + 4 H(+)(out). Its function is as follows. NDH-1 shuttles electrons from NADH, via FMN and iron-sulfur (Fe-S) centers, to quinones in the respiratory chain. The immediate electron acceptor for the enzyme in this species is believed to be a menaquinone. Couples the redox reaction to proton translocation (for every two electrons transferred, four hydrogen ions are translocated across the cytoplasmic membrane), and thus conserves the redox energy in a proton gradient. The polypeptide is NADH-quinone oxidoreductase subunit D 2 (Cytophaga hutchinsonii (strain ATCC 33406 / DSM 1761 / CIP 103989 / NBRC 15051 / NCIMB 9469 / D465)).